Reading from the N-terminus, the 31-residue chain is Cytochrome b6-f complex subunit 6 (31 aa).

A helical transmembrane segment spans residues Ile4–Asn26.

The protein belongs to the PetL family. In terms of assembly, the 4 large subunits of the cytochrome b6-f complex are cytochrome b6, subunit IV (17 kDa polypeptide, PetD), cytochrome f and the Rieske protein, while the 4 small subunits are PetG, PetL, PetM and PetN. The complex functions as a dimer.

It is found in the plastid. The protein localises to the chloroplast thylakoid membrane. Functionally, component of the cytochrome b6-f complex, which mediates electron transfer between photosystem II (PSII) and photosystem I (PSI), cyclic electron flow around PSI, and state transitions. PetL is important for photoautotrophic growth as well as for electron transfer efficiency and stability of the cytochrome b6-f complex. This Dioscorea elephantipes (Elephant's foot yam) protein is Cytochrome b6-f complex subunit 6.